Here is a 538-residue protein sequence, read N- to C-terminus: DALR anticodon-binding domain-containing protein 3 (538 aa).

Part of a complex containing tRNA(Arg) and METTL2. Interacts with tRNA(Arg)(CCU) and tRNA(Arg)(UCU). Interacts with METTL2.

Its function is as follows. Involved in tRNA methylation. Facilitates the recognition and targeting of tRNA(Arg)(CCU) and tRNA(Arg)(UCU) substrates for N(3)-methylcytidine modification by METTL2. This Mus musculus (Mouse) protein is DALR anticodon-binding domain-containing protein 3 (Dalrd3).